The sequence spans 235 residues: MDWLMGKSKAKPNGKKPAAEEKKVYLEPEHTKSRITDFEFKELVVLPREIDLNEWLASNTTTFFHHINLQYSTISEFCTGETCQTMAVCNTQYYWYDERGKKVKCTAPQYVDFVMSSVQKLVTDEDVFPTKYGREFPSSFESLVKKICKYLFHVLGHIYWAHFKETLALELHGHLNTLYVHFILFAREFNLLDPKETAVMDDLTEVLCSSPGNSGATGDGANSGASGAQNHVKER.

Residues 1 to 22 form a disordered region; the sequence is MDWLMGKSKAKPNGKKPAAEEK. Zn(2+) contacts are provided by Cys78, Cys83, His157, and His162. Residues 213–235 form a disordered region; it reads NSGATGDGANSGASGAQNHVKER.

This sequence belongs to the MOB1/phocein family. As to quaternary structure, binds STK38 and STK38L. Phosphorylated.

It localises to the nucleus. The protein localises to the cytoplasm. It is found in the perinuclear region. In terms of biological role, stimulates the autophosphorylation and kinase activity of STK38 and STK38L. The sequence is that of MOB kinase activator 2 (Mob2) from Mus musculus (Mouse).